Reading from the N-terminus, the 151-residue chain is uncharacterized protein (151 aa).

Residues 123–151 (PAGQNAGTGPAQKLKTDETRCYERRGGSQ) form a disordered region. Residues 136 to 151 (LKTDETRCYERRGGSQ) are compositionally biased toward basic and acidic residues.

This is an uncharacterized protein from Triticum aestivum (Wheat).